The chain runs to 179 residues: Large ribosomal subunit protein uL5 (179 aa).

Belongs to the universal ribosomal protein uL5 family. Part of the 50S ribosomal subunit; part of the 5S rRNA/L5/L18/L25 subcomplex. Contacts the 5S rRNA and the P site tRNA. Forms a bridge to the 30S subunit in the 70S ribosome.

In terms of biological role, this is one of the proteins that bind and probably mediate the attachment of the 5S RNA into the large ribosomal subunit, where it forms part of the central protuberance. In the 70S ribosome it contacts protein S13 of the 30S subunit (bridge B1b), connecting the 2 subunits; this bridge is implicated in subunit movement. Contacts the P site tRNA; the 5S rRNA and some of its associated proteins might help stabilize positioning of ribosome-bound tRNAs. The polypeptide is Large ribosomal subunit protein uL5 (Desulfovibrio desulfuricans (strain ATCC 27774 / DSM 6949 / MB)).